The chain runs to 157 residues: MLGHFKKATTAPKRFIKEINFSADVNSNLANLAVGALITNDLFQVGDLVDVTGTSKGKGFAGSIKRHNQSRGPESHGSRYHRRPGSMGPIKGKLKGKKLPGHMGHETVTIQNLAILSVDTEKNLFLIKGNVPGPNKGFVIIKSAVKKLTKEQTHAKN.

Residues 57 to 98 (GKGFAGSIKRHNQSRGPESHGSRYHRRPGSMGPIKGKLKGKK) form a disordered region.

It belongs to the universal ribosomal protein uL3 family. Part of the 50S ribosomal subunit. Forms a cluster with proteins L14 and L19.

Its function is as follows. One of the primary rRNA binding proteins, it binds directly near the 3'-end of the 23S rRNA, where it nucleates assembly of the 50S subunit. This Onion yellows phytoplasma (strain OY-M) protein is Large ribosomal subunit protein uL3 (rplC).